A 201-amino-acid chain; its full sequence is Small ribosomal subunit protein uS4 (201 aa).

The region spanning 91–154 (SRLDNVIYRA…QKMEWFEEAQ (64 aa)) is the S4 RNA-binding domain.

It belongs to the universal ribosomal protein uS4 family. In terms of assembly, part of the 30S ribosomal subunit. Contacts protein S5. The interaction surface between S4 and S5 is involved in control of translational fidelity.

In terms of biological role, one of the primary rRNA binding proteins, it binds directly to 16S rRNA where it nucleates assembly of the body of the 30S subunit. Functionally, with S5 and S12 plays an important role in translational accuracy. The sequence is that of Small ribosomal subunit protein uS4 from Corynebacterium aurimucosum (strain ATCC 700975 / DSM 44827 / CIP 107346 / CN-1) (Corynebacterium nigricans).